Reading from the N-terminus, the 300-residue chain is Ribosomal protein L11 methyltransferase (300 aa).

S-adenosyl-L-methionine contacts are provided by Thr152, Gly173, Asp195, and Asn234.

It belongs to the methyltransferase superfamily. PrmA family.

Its subcellular location is the cytoplasm. The enzyme catalyses L-lysyl-[protein] + 3 S-adenosyl-L-methionine = N(6),N(6),N(6)-trimethyl-L-lysyl-[protein] + 3 S-adenosyl-L-homocysteine + 3 H(+). Functionally, methylates ribosomal protein L11. In Burkholderia pseudomallei (strain 1710b), this protein is Ribosomal protein L11 methyltransferase.